Consider the following 523-residue polypeptide: 2-isopropylmalate synthase (523 aa).

Positions 5–267 constitute a Pyruvate carboxyltransferase domain; it reads VIIFDTTLRD…HTNINHHEIW (263 aa). The Mn(2+) site is built by D14, H202, H204, and N238. The tract at residues 392-523 is regulatory domain; sequence RLDYFSVQSG…HNKENNKEIV (132 aa).

The protein belongs to the alpha-IPM synthase/homocitrate synthase family. LeuA type 1 subfamily. In terms of assembly, homodimer. It depends on Mn(2+) as a cofactor.

The protein localises to the cytoplasm. It carries out the reaction 3-methyl-2-oxobutanoate + acetyl-CoA + H2O = (2S)-2-isopropylmalate + CoA + H(+). The protein operates within amino-acid biosynthesis; L-leucine biosynthesis; L-leucine from 3-methyl-2-oxobutanoate: step 1/4. In terms of biological role, catalyzes the condensation of the acetyl group of acetyl-CoA with 3-methyl-2-oxobutanoate (2-ketoisovalerate) to form 3-carboxy-3-hydroxy-4-methylpentanoate (2-isopropylmalate). This is 2-isopropylmalate synthase from Salmonella arizonae (strain ATCC BAA-731 / CDC346-86 / RSK2980).